The following is a 351-amino-acid chain: Phosphoribosylformylglycinamidine cyclo-ligase (351 aa).

It belongs to the AIR synthase family.

Its subcellular location is the cytoplasm. The catalysed reaction is 2-formamido-N(1)-(5-O-phospho-beta-D-ribosyl)acetamidine + ATP = 5-amino-1-(5-phospho-beta-D-ribosyl)imidazole + ADP + phosphate + H(+). Its pathway is purine metabolism; IMP biosynthesis via de novo pathway; 5-amino-1-(5-phospho-D-ribosyl)imidazole from N(2)-formyl-N(1)-(5-phospho-D-ribosyl)glycinamide: step 2/2. The chain is Phosphoribosylformylglycinamidine cyclo-ligase from Burkholderia pseudomallei (strain 668).